We begin with the raw amino-acid sequence, 63 residues long: MVQRCLVVALLVVVVAAALCSAQLNFTPNWGTGKRDAGDYGDPYSFLYRLIQAEARKMSGCSN.

Positions 1–22 (MVQRCLVVALLVVVVAAALCSA) are cleaved as a signal peptide. The residue at position 23 (Gln23) is a Pyrrolidone carboxylic acid. Thr32 bears the Threonine amide mark.

Belongs to the AKH/HRTH/RPCH family. As to quaternary structure, adipokinetic hormone precursor-related peptide (APRP) can form three type of disulfide-bond dimers: p1 (alpha-alpha), p2 (alpha-beta), and p3 (beta-beta).

It localises to the secreted. Functionally, this hormone, released from cells in the corpora cardiaca, causes release of diglycerides from the fat body and stimulation of muscles to use these diglycerides as an energy source during energy-demanding processes. This Schistocerca nitens (Vagrant locust) protein is Adipokinetic prohormone type 1.